A 109-amino-acid polypeptide reads, in one-letter code: Sperm-specific class P protein 19 (109 aa).

In terms of domain architecture, MSP spans 1 to 109 (MSLTADPPAC…TVTIPMSATA (109 aa)).

As to quaternary structure, monomer. As to expression, expressed at higher level in testis.

This Caenorhabditis elegans protein is Sperm-specific class P protein 19 (ssp-19).